The sequence spans 55 residues: ATP synthase F(0) complex subunit 8 (55 aa).

Residues 10 to 30 (FPIMMLSWLIFSLIIQPKLLL) form a helical membrane-spanning segment. Residues 35–55 (NPPSNKTTTTTRSNPWTWPWT) form a disordered region. Low complexity predominate over residues 37–55 (PSNKTTTTTRSNPWTWPWT).

The protein belongs to the ATPase protein 8 family. As to quaternary structure, component of the ATP synthase complex composed at least of ATP5F1A/subunit alpha, ATP5F1B/subunit beta, ATP5MC1/subunit c (homooctomer), MT-ATP6/subunit a, MT-ATP8/subunit 8, ATP5ME/subunit e, ATP5MF/subunit f, ATP5MG/subunit g, ATP5MK/subunit k, ATP5MJ/subunit j, ATP5F1C/subunit gamma, ATP5F1D/subunit delta, ATP5F1E/subunit epsilon, ATP5PF/subunit F6, ATP5PB/subunit b, ATP5PD/subunit d, ATP5PO/subunit OSCP. ATP synthase complex consists of a soluble F(1) head domain (subunits alpha(3) and beta(3)) - the catalytic core - and a membrane F(0) domain - the membrane proton channel (subunits c, a, 8, e, f, g, k and j). These two domains are linked by a central stalk (subunits gamma, delta, and epsilon) rotating inside the F1 region and a stationary peripheral stalk (subunits F6, b, d, and OSCP).

Its subcellular location is the mitochondrion membrane. In terms of biological role, subunit 8, of the mitochondrial membrane ATP synthase complex (F(1)F(0) ATP synthase or Complex V) that produces ATP from ADP in the presence of a proton gradient across the membrane which is generated by electron transport complexes of the respiratory chain. ATP synthase complex consist of a soluble F(1) head domain - the catalytic core - and a membrane F(1) domain - the membrane proton channel. These two domains are linked by a central stalk rotating inside the F(1) region and a stationary peripheral stalk. During catalysis, ATP synthesis in the catalytic domain of F(1) is coupled via a rotary mechanism of the central stalk subunits to proton translocation. In vivo, can only synthesize ATP although its ATP hydrolase activity can be activated artificially in vitro. Part of the complex F(0) domain. The sequence is that of ATP synthase F(0) complex subunit 8 from Opisthocomus hoazin (Hoatzin).